The following is a 486-amino-acid chain: Pup--protein ligase (486 aa).

Residue E33 coordinates Mg(2+). ATP is bound at residue R76. Y78 is a binding site for Mg(2+). The Proton acceptor role is filled by D80. Mg(2+) is bound at residue E86. T89 and W451 together coordinate ATP.

This sequence belongs to the Pup ligase/Pup deamidase family. Pup-conjugating enzyme subfamily.

The enzyme catalyses ATP + [prokaryotic ubiquitin-like protein]-L-glutamate + [protein]-L-lysine = ADP + phosphate + N(6)-([prokaryotic ubiquitin-like protein]-gamma-L-glutamyl)-[protein]-L-lysine.. Its pathway is protein degradation; proteasomal Pup-dependent pathway. It participates in protein modification; protein pupylation. Functionally, catalyzes the covalent attachment of the prokaryotic ubiquitin-like protein modifier Pup to the proteasomal substrate proteins, thereby targeting them for proteasomal degradation. This tagging system is termed pupylation. The ligation reaction involves the side-chain carboxylate of the C-terminal glutamate of Pup and the side-chain amino group of a substrate lysine. The polypeptide is Pup--protein ligase (Bifidobacterium longum (strain DJO10A)).